We begin with the raw amino-acid sequence, 34 residues long: Photosystem II reaction center protein M (34 aa).

Residues 5–25 form a helical membrane-spanning segment; the sequence is ILAFIATALFILVPTAFLLII.

Belongs to the PsbM family. PSII is composed of 1 copy each of membrane proteins PsbA, PsbB, PsbC, PsbD, PsbE, PsbF, PsbH, PsbI, PsbJ, PsbK, PsbL, PsbM, PsbT, PsbX, PsbY, PsbZ, Psb30/Ycf12, at least 3 peripheral proteins of the oxygen-evolving complex and a large number of cofactors. It forms dimeric complexes.

It localises to the plastid. It is found in the chloroplast thylakoid membrane. In terms of biological role, one of the components of the core complex of photosystem II (PSII). PSII is a light-driven water:plastoquinone oxidoreductase that uses light energy to abstract electrons from H(2)O, generating O(2) and a proton gradient subsequently used for ATP formation. It consists of a core antenna complex that captures photons, and an electron transfer chain that converts photonic excitation into a charge separation. This subunit is found at the monomer-monomer interface. The sequence is that of Photosystem II reaction center protein M from Ceratophyllum demersum (Rigid hornwort).